Reading from the N-terminus, the 559-residue chain is (-)-drimenol synthase (559 aa).

5 residues coordinate Mg(2+): Asp-311, Asp-315, Asp-456, Ser-460, and Glu-464. The DDXXD motif motif lies at 311 to 315 (DDIYD).

It belongs to the terpene synthase family. Requires Mg(2+) as cofactor.

The catalysed reaction is (2E,6E)-farnesyl diphosphate + H2O = (5S,9S,10S)-drim-7-en-11-ol + diphosphate. The protein operates within secondary metabolite biosynthesis; terpenoid biosynthesis. Its function is as follows. Catalyzes the conversion of (2E,6E)-farnesyl diphosphate (FPP) into drimenol, a precursor of the sesquiterpenoid polygodial. Polygodial has been shown to be an antifeedant for a number of herbivorous insects. This chain is (-)-drimenol synthase, found in Persicaria hydropiper (Marshpepper knotweed).